Here is a 97-residue protein sequence, read N- to C-terminus: Thiosulfate sulfurtransferase/rhodanese-like domain-containing protein 3 (97 aa).

Residues 32–84 (YKELKNLLNSKNIMLIDVREIWEILEYQKIPESINVPLDEVGEALQMNPRDFK) form the Rhodanese domain. Residue Lys84 is modified to N6-succinyllysine.

The chain is Thiosulfate sulfurtransferase/rhodanese-like domain-containing protein 3 (TSTD3) from Homo sapiens (Human).